Consider the following 610-residue polypeptide: Ecto-NOX disulfide-thiol exchanger 2 (610 aa).

Residues 128-207 (KTVFVGGLPE…GRLHVDFAQA (80 aa)) enclose the RRM domain. 2 coiled-coil regions span residues 293–328 (IQSANSHVRRLVNEKAAHEKDMEEAKEKFKQALSGI) and 381–505 (RREE…KESC).

This sequence belongs to the ENOX family. It depends on Cu cation as a cofactor. Glycosylated. Found in the sera of cancer patients with a wide variety of cancers including breast, prostate, lung and ovarian cancers, leukemias, and lymphomas. Not found in the serum of healthy volunteers or patients with disorders other than cancer. Probably shed into serum by cancer cells. Found on the cell borders of renal, kidney and ovarian carcinomas but not on the borders of surrounding non-cancerous stromal cells.

It is found in the cell membrane. It localises to the secreted. The protein resides in the extracellular space. With respect to regulation, inhibited by the antitumor sulfonylurea LY181984, the vabilloid capsaicin, and retinoids. May be involved in cell growth. Probably acts as a terminal oxidase of plasma electron transport from cytosolic NAD(P)H via hydroquinones to acceptors at the cell surface. Hydroquinone oxidase activity alternates with a protein disulfide-thiol interchange/oxidoreductase activity which may control physical membrane displacements associated with vesicle budding or cell enlargement. The activities oscillate with a period length of 22 minutes and play a role in control of the ultradian cellular biological clock. In Homo sapiens (Human), this protein is Ecto-NOX disulfide-thiol exchanger 2 (ENOX2).